The following is a 467-amino-acid chain: ATP synthase subunit beta (467 aa).

150–157 (GGAGVGKT) provides a ligand contact to ATP.

The protein belongs to the ATPase alpha/beta chains family. In terms of assembly, F-type ATPases have 2 components, CF(1) - the catalytic core - and CF(0) - the membrane proton channel. CF(1) has five subunits: alpha(3), beta(3), gamma(1), delta(1), epsilon(1). CF(0) has three main subunits: a(1), b(2) and c(9-12). The alpha and beta chains form an alternating ring which encloses part of the gamma chain. CF(1) is attached to CF(0) by a central stalk formed by the gamma and epsilon chains, while a peripheral stalk is formed by the delta and b chains.

Its subcellular location is the cell inner membrane. The enzyme catalyses ATP + H2O + 4 H(+)(in) = ADP + phosphate + 5 H(+)(out). In terms of biological role, produces ATP from ADP in the presence of a proton gradient across the membrane. The catalytic sites are hosted primarily by the beta subunits. This chain is ATP synthase subunit beta, found in Aliivibrio salmonicida (strain LFI1238) (Vibrio salmonicida (strain LFI1238)).